A 272-amino-acid polypeptide reads, in one-letter code: Ribosomal RNA small subunit methyltransferase A (272 aa).

Residues asparagine 15, isoleucine 17, glycine 42, glutamate 64, aspartate 90, and asparagine 109 each coordinate S-adenosyl-L-methionine.

This sequence belongs to the class I-like SAM-binding methyltransferase superfamily. rRNA adenine N(6)-methyltransferase family. RsmA subfamily.

It is found in the cytoplasm. The catalysed reaction is adenosine(1518)/adenosine(1519) in 16S rRNA + 4 S-adenosyl-L-methionine = N(6)-dimethyladenosine(1518)/N(6)-dimethyladenosine(1519) in 16S rRNA + 4 S-adenosyl-L-homocysteine + 4 H(+). Functionally, specifically dimethylates two adjacent adenosines (A1518 and A1519) in the loop of a conserved hairpin near the 3'-end of 16S rRNA in the 30S particle. May play a critical role in biogenesis of 30S subunits. In Wolbachia sp. subsp. Drosophila simulans (strain wRi), this protein is Ribosomal RNA small subunit methyltransferase A.